We begin with the raw amino-acid sequence, 155 residues long: Protein-export protein SecB 1 (155 aa).

The protein belongs to the SecB family. Homotetramer, a dimer of dimers. One homotetramer interacts with 1 SecA dimer.

It is found in the cytoplasm. Functionally, one of the proteins required for the normal export of preproteins out of the cell cytoplasm. It is a molecular chaperone that binds to a subset of precursor proteins, maintaining them in a translocation-competent state. It also specifically binds to its receptor SecA. The sequence is that of Protein-export protein SecB 1 from Polaromonas naphthalenivorans (strain CJ2).